The primary structure comprises 545 residues: T-complex protein 1 subunit alpha (545 aa).

The residue at position 2 (Ser2) is an N-acetylserine.

It belongs to the TCP-1 chaperonin family. As to quaternary structure, heterooligomeric complex of about 850 to 900 kDa that forms two stacked rings, 12 to 16 nm in diameter.

It is found in the cytoplasm. Molecular chaperone; assists the folding of proteins upon ATP hydrolysis. Known to play a role, in vitro, in the folding of actin and tubulin. The sequence is that of T-complex protein 1 subunit alpha from Arabidopsis thaliana (Mouse-ear cress).